A 725-amino-acid chain; its full sequence is ATP-dependent zinc metalloprotease FtsH (725 aa).

The Cytoplasmic segment spans residues 1–11 (MDKMKKPKINW). The helical transmembrane segment at 12–32 (LLIVIVGIIAALLITVLVLLF) threads the bilayer. At 33-160 (SPKTQPKSFD…LFGQHIVQEN (128 aa)) the chain is on the extracellular side. A helical transmembrane segment spans residues 161 to 181 (GFITFIKAIWFPALIAIIIFL). The Cytoplasmic portion of the chain corresponds to 182–725 (GYKAQSRAAS…EEETLAEKAE (544 aa)). ATP is bound at residue 252–259 (GPPGTGKT). A Zn(2+)-binding site is contributed by His-474. Glu-475 is an active-site residue. Residues His-478 and Asp-552 each coordinate Zn(2+). A disordered region spans residues 680–725 (QVNESQEKDKQKNAQIKEDLSKMDKKDNLTKAKDKGEEETLAEKAE). Residues 684-725 (SQEKDKQKNAQIKEDLSKMDKKDNLTKAKDKGEEETLAEKAE) are compositionally biased toward basic and acidic residues.

The protein in the central section; belongs to the AAA ATPase family. In the C-terminal section; belongs to the peptidase M41 family. Homohexamer. The cofactor is Zn(2+).

It localises to the cell membrane. Acts as a processive, ATP-dependent zinc metallopeptidase for both cytoplasmic and membrane proteins. Plays a role in the quality control of integral membrane proteins. The protein is ATP-dependent zinc metalloprotease FtsH of Mycoplasmopsis pulmonis (strain UAB CTIP) (Mycoplasma pulmonis).